The sequence spans 275 residues: Ribosomal RNA small subunit methyltransferase A (275 aa).

S-adenosyl-L-methionine contacts are provided by Asn-21, Leu-23, Gly-48, Glu-69, Asp-94, and Asn-115.

The protein belongs to the class I-like SAM-binding methyltransferase superfamily. rRNA adenine N(6)-methyltransferase family. RsmA subfamily.

The protein localises to the cytoplasm. It carries out the reaction adenosine(1518)/adenosine(1519) in 16S rRNA + 4 S-adenosyl-L-methionine = N(6)-dimethyladenosine(1518)/N(6)-dimethyladenosine(1519) in 16S rRNA + 4 S-adenosyl-L-homocysteine + 4 H(+). Functionally, specifically dimethylates two adjacent adenosines (A1518 and A1519) in the loop of a conserved hairpin near the 3'-end of 16S rRNA in the 30S particle. May play a critical role in biogenesis of 30S subunits. The protein is Ribosomal RNA small subunit methyltransferase A of Clostridium botulinum (strain Kyoto / Type A2).